A 180-amino-acid chain; its full sequence is UDP-4-amino-4,6-dideoxy-N-acetyl-beta-L-altrosamine N-acetyltransferase (180 aa).

In terms of domain architecture, N-acetyltransferase spans 13 to 169; the sequence is IDFTNLNDGE…IDVLLYYKDK (157 aa).

It carries out the reaction UDP-4-amino-4,6-dideoxy-N-acetyl-beta-L-altrosamine + acetyl-CoA = UDP-2,4-diacetamido-2,4,6-trideoxy-beta-L-altrose + CoA + H(+). In terms of biological role, catalyzes the third step in the biosynthesis of pseudaminic acid, a sialic-acid-like sugar that is used to modify flagellin. Mediates N-4 acetylation of UDP-4-amino-4,6-dideoxy-beta-L-AltNAc to form UDP-2,4-diacetamido-2,4,6-trideoxy-beta-L-altropyranose. The sequence is that of UDP-4-amino-4,6-dideoxy-N-acetyl-beta-L-altrosamine N-acetyltransferase (pseH) from Helicobacter pylori (strain ATCC 700392 / 26695) (Campylobacter pylori).